Consider the following 539-residue polypeptide: Phospho-2-dehydro-3-deoxyheptonate aldolase 2, chloroplastic (539 aa).

Disordered stretches follow at residues 1 to 23 (MALATNSAAVSGGAAAAASSAPQ) and 41 to 70 (VHAADPAKSNGPVQAAAKASSPSTVAAPEK). A chloroplast-targeting transit peptide spans 1–54 (MALATNSAAVSGGAAAAASSAPQPRLAATFLPMRRRTVSAVHAADPAKSNGPVQ). A compositionally biased stretch (low complexity) spans 7–21 (SAAVSGGAAAAASSA).

It belongs to the class-II DAHP synthase family.

The protein resides in the plastid. It localises to the chloroplast. The enzyme catalyses D-erythrose 4-phosphate + phosphoenolpyruvate + H2O = 7-phospho-2-dehydro-3-deoxy-D-arabino-heptonate + phosphate. It participates in metabolic intermediate biosynthesis; chorismate biosynthesis; chorismate from D-erythrose 4-phosphate and phosphoenolpyruvate: step 1/7. The sequence is that of Phospho-2-dehydro-3-deoxyheptonate aldolase 2, chloroplastic (DAHPS2) from Oryza sativa subsp. japonica (Rice).